A 438-amino-acid polypeptide reads, in one-letter code: 3-phosphoshikimate 1-carboxyvinyltransferase (438 aa).

Lys-21 is a binding site for phosphoenolpyruvate. 3-phosphoshikimate-binding residues include Ser-22 and Arg-26. The phosphoenolpyruvate stretch occupies residues 93–96; that stretch reads NSGT. Residues Gly-95, Thr-96, and Arg-123 each coordinate phosphoenolpyruvate. Residues Ser-167, Ala-168, Gln-169, Asp-315, and Lys-342 each contribute to the 3-phosphoshikimate site. Gln-169 contributes to the phosphoenolpyruvate binding site. The active-site Proton acceptor is Asp-315. The phosphoenolpyruvate site is built by Arg-346 and Arg-387.

This sequence belongs to the EPSP synthase family. As to quaternary structure, homodimer or homotetramer.

Its subcellular location is the cytoplasm. The enzyme catalyses 3-phosphoshikimate + phosphoenolpyruvate = 5-O-(1-carboxyvinyl)-3-phosphoshikimate + phosphate. The protein operates within metabolic intermediate biosynthesis; chorismate biosynthesis; chorismate from D-erythrose 4-phosphate and phosphoenolpyruvate: step 6/7. Its function is as follows. Catalyzes the transfer of the enolpyruvyl moiety of phosphoenolpyruvate (PEP) to the 5-hydroxyl of shikimate-3-phosphate (S3P) to produce enolpyruvyl shikimate-3-phosphate and inorganic phosphate. This Coxiella burnetii (strain RSA 493 / Nine Mile phase I) protein is 3-phosphoshikimate 1-carboxyvinyltransferase.